We begin with the raw amino-acid sequence, 157 residues long: Transcriptional repressor NrdR (157 aa).

The disordered stretch occupies residues 1–26 (MRCPKCGGSKSSVIDSRQAEDGNTIR). A zinc finger lies at 3–34 (CPKCGGSKSSVIDSRQAEDGNTIRRRRECEDC). The segment covering 17–26 (RQAEDGNTIR) has biased composition (basic and acidic residues). In terms of domain architecture, ATP-cone spans 49-139 (LVVVKKDGTR…VYRSFKDVGE (91 aa)).

Belongs to the NrdR family. Requires Zn(2+) as cofactor.

Functionally, negatively regulates transcription of bacterial ribonucleotide reductase nrd genes and operons by binding to NrdR-boxes. The protein is Transcriptional repressor NrdR of Streptococcus gordonii (strain Challis / ATCC 35105 / BCRC 15272 / CH1 / DL1 / V288).